Here is a 670-residue protein sequence, read N- to C-terminus: Auxin response factor 16 (670 aa).

Positions 120–222 (FAKTLTQSDA…DLCVGIRRAK (103 aa)) form a DNA-binding region, TF-B3. Residues 545 to 557 (KTQISSGGSNQNG) are compositionally biased toward polar residues. A disordered region spans residues 545 to 579 (KTQISSGGSNQNGVAGREFSSSDEGSPCSKKVHDA). Residues 584-664 (TGHCKVFMES…RRLTILTEQG (81 aa)) enclose the PB1 domain.

This sequence belongs to the ARF family. As to quaternary structure, homodimers and heterodimers.

It localises to the nucleus. Auxin response factors (ARFs) are transcriptional factors that bind specifically to the DNA sequence 5'-TGTCTC-3' found in the auxin-responsive promoter elements (AuxREs). Could act as transcriptional activator or repressor. Formation of heterodimers with Aux/IAA proteins may alter their ability to modulate early auxin response genes expression. The sequence is that of Auxin response factor 16 (ARF16) from Arabidopsis thaliana (Mouse-ear cress).